Reading from the N-terminus, the 119-residue chain is Large ribosomal subunit protein uL18 (119 aa).

Residues 1–22 (MGHVEKVARRHKIKTRSKARGQ) form a disordered region. Over residues 8–19 (ARRHKIKTRSKA) the composition is skewed to basic residues.

This sequence belongs to the universal ribosomal protein uL18 family. As to quaternary structure, part of the 50S ribosomal subunit; part of the 5S rRNA/L5/L18/L25 subcomplex. Contacts the 5S and 23S rRNAs.

This is one of the proteins that bind and probably mediate the attachment of the 5S RNA into the large ribosomal subunit, where it forms part of the central protuberance. In Chlorobium phaeobacteroides (strain BS1), this protein is Large ribosomal subunit protein uL18.